Consider the following 230-residue polypeptide: 5'-methylthioadenosine/S-adenosylhomocysteine nucleosidase (230 aa).

The active-site Proton acceptor is the E12. Substrate-binding positions include G78, I153, and 174-175 (ME). The active-site Proton donor is the D198.

Belongs to the PNP/UDP phosphorylase family. MtnN subfamily.

It carries out the reaction S-adenosyl-L-homocysteine + H2O = S-(5-deoxy-D-ribos-5-yl)-L-homocysteine + adenine. The catalysed reaction is S-methyl-5'-thioadenosine + H2O = 5-(methylsulfanyl)-D-ribose + adenine. The enzyme catalyses 5'-deoxyadenosine + H2O = 5-deoxy-D-ribose + adenine. It participates in amino-acid biosynthesis; L-methionine biosynthesis via salvage pathway; S-methyl-5-thio-alpha-D-ribose 1-phosphate from S-methyl-5'-thioadenosine (hydrolase route): step 1/2. Catalyzes the irreversible cleavage of the glycosidic bond in both 5'-methylthioadenosine (MTA) and S-adenosylhomocysteine (SAH/AdoHcy) to adenine and the corresponding thioribose, 5'-methylthioribose and S-ribosylhomocysteine, respectively. Also cleaves 5'-deoxyadenosine, a toxic by-product of radical S-adenosylmethionine (SAM) enzymes, into 5-deoxyribose and adenine. The chain is 5'-methylthioadenosine/S-adenosylhomocysteine nucleosidase from Shewanella pealeana (strain ATCC 700345 / ANG-SQ1).